A 287-amino-acid polypeptide reads, in one-letter code: Ribosomal RNA small subunit methyltransferase A (287 aa).

Residues asparagine 28, leucine 30, glycine 55, glutamate 77, aspartate 103, and asparagine 123 each coordinate S-adenosyl-L-methionine.

The protein belongs to the class I-like SAM-binding methyltransferase superfamily. rRNA adenine N(6)-methyltransferase family. RsmA subfamily.

The protein localises to the cytoplasm. It catalyses the reaction adenosine(1518)/adenosine(1519) in 16S rRNA + 4 S-adenosyl-L-methionine = N(6)-dimethyladenosine(1518)/N(6)-dimethyladenosine(1519) in 16S rRNA + 4 S-adenosyl-L-homocysteine + 4 H(+). In terms of biological role, specifically dimethylates two adjacent adenosines (A1518 and A1519) in the loop of a conserved hairpin near the 3'-end of 16S rRNA in the 30S particle. May play a critical role in biogenesis of 30S subunits. The protein is Ribosomal RNA small subunit methyltransferase A of Rhodopseudomonas palustris (strain HaA2).